The chain runs to 339 residues: Heat-inducible transcription repressor HrcA (339 aa).

This sequence belongs to the HrcA family.

Its function is as follows. Negative regulator of class I heat shock genes (grpE-dnaK-dnaJ and groELS operons). Prevents heat-shock induction of these operons. This Clostridium perfringens (strain 13 / Type A) protein is Heat-inducible transcription repressor HrcA.